The primary structure comprises 231 residues: Inner membrane protein YohK (231 aa).

A topological domain (periplasmic) is located at residue Met-1. Residues 2–22 form a helical membrane-spanning segment; that stretch reads MANIWWSLPLTLIVFFAARKL. The Cytoplasmic portion of the chain corresponds to 23-29; the sequence is AARYKFP. Residues 30–50 form a helical membrane-spanning segment; it reads LLNPLLVAMVVIIPFLMLTGI. The Periplasmic segment spans residues 51-90; sequence SYDSYFKGSEVLNDLLQPAVVALAYPLYEQLHQIRARWKS. A helical transmembrane segment spans residues 91–111; that stretch reads IITICFIGSVVAMVTGTSVAL. The Cytoplasmic portion of the chain corresponds to 112-118; sequence LMGASPE. Transmembrane regions (helical) follow at residues 119–139 and 140–160; these read IAASILPKSVTTPIAMAVGGS and IGGIPAISAVCVIFVGILGAV. Over 161–208 the chain is Cytoplasmic; the sequence is FGHTLLNAMRIRTKAARGLAMGTASHALGTARCAELDYQEGAFSSLAL. Residues 209–229 traverse the membrane as a helical segment; it reads VLCGIITSLIAPFLFPIILAV. The Periplasmic portion of the chain corresponds to 230–231; that stretch reads MG.

The protein belongs to the YohK (E.coli)/YwbG (IPA-22R) (B.subtilis) family.

It localises to the cell inner membrane. This is Inner membrane protein YohK (yohK) from Escherichia coli (strain K12).